The sequence spans 329 residues: Nitrogenase iron-iron protein beta chain (329 aa).

[8Fe-7S] cluster contacts are provided by C20, C45, C104, and S143. Positions 213–288 (SADGSLVSHG…EEGDGKPIPQ (76 aa)) are disordered. Residues 257–271 (RSRRSSARPRSHPQY) are compositionally biased toward basic residues.

The protein belongs to the NifD/NifK/NifE/NifN family. As to quaternary structure, hexamer of two alpha, two beta, and two delta chains. Requires [8Fe-7S] cluster as cofactor.

The enzyme catalyses N2 + 8 reduced [2Fe-2S]-[ferredoxin] + 16 ATP + 16 H2O = H2 + 8 oxidized [2Fe-2S]-[ferredoxin] + 2 NH4(+) + 16 ADP + 16 phosphate + 6 H(+). Its function is as follows. This iron-iron protein is part of the nitrogenase complex that catalyzes the key enzymatic reactions in nitrogen fixation. Other nitrogenase complexes utilize a molybdenum-iron protein or a vanadium-iron protein. The protein is Nitrogenase iron-iron protein beta chain (anfK) of Ruminiclostridium hungatei (Clostridium hungatei).